The chain runs to 125 residues: Large ribosomal subunit protein bL12 (125 aa).

This sequence belongs to the bacterial ribosomal protein bL12 family. As to quaternary structure, homodimer. Part of the ribosomal stalk of the 50S ribosomal subunit. Forms a multimeric L10(L12)X complex, where L10 forms an elongated spine to which 2 to 4 L12 dimers bind in a sequential fashion. Binds GTP-bound translation factors.

Functionally, forms part of the ribosomal stalk which helps the ribosome interact with GTP-bound translation factors. Is thus essential for accurate translation. The polypeptide is Large ribosomal subunit protein bL12 (Helicobacter pylori (strain P12)).